The sequence spans 513 residues: Mesoderm induction early response protein 1 (513 aa).

The span at 1–16 (MAEPSVESSSPGGSAT) shows a compositional bias: low complexity. The tract at residues 1-174 (MAEPSVESSS…EEESEEDEDY (174 aa)) is disordered. 2 stretches are compositionally biased toward basic and acidic residues: residues 17–36 (SDDH…FDDE) and 46–63 (EGER…RESD). A compositionally biased stretch (acidic residues) spans 82–107 (QEDDDDEDEEEEEEEGEDDDDVDNDD). A compositionally biased stretch (polar residues) spans 131–146 (QSSNDDPAPSVASQDP). An interaction with HDAC1 region spans residues 157–261 (YFDTNSEIEE…IKDNEQALYE (105 aa)). Positions 162 to 174 (SEIEEESEEDEDY) are enriched in acidic residues. The 99-residue stretch at 182 to 280 (KEIMVGSMFQ…ESLRRLRFNV (99 aa)) folds into the ELM2 domain. The SANT domain occupies 285-337 (EELSVWTEEECRNFEQGLKVYGKDFHVIQANKVRTRSVGECVAFYYMWKKSER). The disordered stretch occupies residues 368 to 513 (ESESAASSRA…KLEELETLDD (146 aa)). Basic and acidic residues-rich tracts occupy residues 416–425 (PSKDEAKPEG) and 463–476 (SRSE…NERP). Polar residues predominate over residues 483-500 (NSNGKESPGSSEFFQEAN).

It localises to the nucleus. Its function is as follows. Transcriptional repressor regulating the expression of a number of genes. Probably functions through recruitment of histone deacetylases involved in chromatin silencing. In Gallus gallus (Chicken), this protein is Mesoderm induction early response protein 1 (MIER1).